Consider the following 178-residue polypeptide: ATP synthase subunit b (178 aa).

A helical membrane pass occupies residues 11 to 31 (IIPEPVEIVVGLVAFLLLLFV).

It belongs to the ATPase B chain family. As to quaternary structure, F-type ATPases have 2 components, F(1) - the catalytic core - and F(0) - the membrane proton channel. F(1) has five subunits: alpha(3), beta(3), gamma(1), delta(1), epsilon(1). F(0) has three main subunits: a(1), b(2) and c(10-14). The alpha and beta chains form an alternating ring which encloses part of the gamma chain. F(1) is attached to F(0) by a central stalk formed by the gamma and epsilon chains, while a peripheral stalk is formed by the delta and b chains.

The protein localises to the cell membrane. F(1)F(0) ATP synthase produces ATP from ADP in the presence of a proton or sodium gradient. F-type ATPases consist of two structural domains, F(1) containing the extramembraneous catalytic core and F(0) containing the membrane proton channel, linked together by a central stalk and a peripheral stalk. During catalysis, ATP synthesis in the catalytic domain of F(1) is coupled via a rotary mechanism of the central stalk subunits to proton translocation. Functionally, component of the F(0) channel, it forms part of the peripheral stalk, linking F(1) to F(0). The sequence is that of ATP synthase subunit b from Saccharopolyspora erythraea (strain ATCC 11635 / DSM 40517 / JCM 4748 / NBRC 13426 / NCIMB 8594 / NRRL 2338).